The primary structure comprises 82 residues: Exodeoxyribonuclease 7 small subunit (82 aa).

This sequence belongs to the XseB family. In terms of assembly, heterooligomer composed of large and small subunits.

Its subcellular location is the cytoplasm. It carries out the reaction Exonucleolytic cleavage in either 5'- to 3'- or 3'- to 5'-direction to yield nucleoside 5'-phosphates.. Its function is as follows. Bidirectionally degrades single-stranded DNA into large acid-insoluble oligonucleotides, which are then degraded further into small acid-soluble oligonucleotides. This is Exodeoxyribonuclease 7 small subunit from Pectobacterium carotovorum subsp. carotovorum (strain PC1).